Here is a 463-residue protein sequence, read N- to C-terminus: O-acetyltransferase SAT5 (463 aa).

Belongs to the trichothecene 3-O-acetyltransferase family.

It participates in mycotoxin biosynthesis. Functionally, O-acetyltransferase; part of the satratoxin SC1 cluster involved in the biosynthesis of satratoxins, trichothecene mycotoxins that are associated with human food poisonings. Satratoxins are suggested to be made by products of multiple gene clusters (SC1, SC2 and SC3) that encode 21 proteins in all, including polyketide synthases, acetyltransferases, and other enzymes expected to modify the trichothecene skeleton. SC1 encodes 10 proteins, SAT1 to SAT10. The largest are SAT8, which encodes a putative polyketide synthase (PKS) with a conventional non-reducing architecture, and SAT10, a putative protein containing four ankyrin repeats and thus may be involved in protein scaffolding. The putative short-chain reductase SAT3 may assist the PKS in some capacity. SAT6 contains a secretory lipase domain and acts probably as a trichothecene esterase. SAT5 encodes a putative acetyltransferase, and so, with SAT6, may affect endogenous protection from toxicity. The probable transcription factor SAT9 may regulate the expression of the SC1 cluster. SC2 encodes proteins SAT11 to SAT16, the largest of which encodes the putative reducing PKS SAT13. SAT11 is a cytochrome P450 monooxygenase, while SAT14 and SAT16 are probable acetyltransferases. The SC2 cluster may be regulated by the transcription factor SAT15. SC3 is a small cluster that encodes 5 proteins, SAT17 to SAT21. SAT21 is a putative MFS-type transporter which may have a role in exporting secondary metabolites. The four other proteins putatively encoded in SC3 include the taurine hydroxylase-like protein SAT17, the O-methyltransferase SAT18, the acetyltransferase SAT19, and the Cys6-type zinc finger SAT20, the latter being probably involved in regulation of SC3 expression. This Stachybotrys chartarum (strain CBS 109288 / IBT 7711) (Toxic black mold) protein is O-acetyltransferase SAT5.